The primary structure comprises 397 residues: Dual-specificity RNA methyltransferase RlmN (397 aa).

Glu-116 functions as the Proton acceptor in the catalytic mechanism. The region spanning 122–366 (EDDRGTLCIS…SPIRKTRGDD (245 aa)) is the Radical SAM core domain. A disulfide bridge connects residues Cys-129 and Cys-371. The [4Fe-4S] cluster site is built by Cys-136, Cys-140, and Cys-143. Residues 195-196 (GE), Ser-227, 249-251 (SFH), and Asn-328 each bind S-adenosyl-L-methionine. Cys-371 functions as the S-methylcysteine intermediate in the catalytic mechanism.

The protein belongs to the radical SAM superfamily. RlmN family. The cofactor is [4Fe-4S] cluster.

Its subcellular location is the cytoplasm. The enzyme catalyses adenosine(2503) in 23S rRNA + 2 reduced [2Fe-2S]-[ferredoxin] + 2 S-adenosyl-L-methionine = 2-methyladenosine(2503) in 23S rRNA + 5'-deoxyadenosine + L-methionine + 2 oxidized [2Fe-2S]-[ferredoxin] + S-adenosyl-L-homocysteine. It catalyses the reaction adenosine(37) in tRNA + 2 reduced [2Fe-2S]-[ferredoxin] + 2 S-adenosyl-L-methionine = 2-methyladenosine(37) in tRNA + 5'-deoxyadenosine + L-methionine + 2 oxidized [2Fe-2S]-[ferredoxin] + S-adenosyl-L-homocysteine. In terms of biological role, specifically methylates position 2 of adenine 2503 in 23S rRNA and position 2 of adenine 37 in tRNAs. m2A2503 modification seems to play a crucial role in the proofreading step occurring at the peptidyl transferase center and thus would serve to optimize ribosomal fidelity. The polypeptide is Dual-specificity RNA methyltransferase RlmN (Ruegeria sp. (strain TM1040) (Silicibacter sp.)).